Consider the following 202-residue polypeptide: Holliday junction branch migration complex subunit RuvA (202 aa).

A domain I region spans residues 1–64; the sequence is MIGRLRGSLA…EDAHLLYGFY (64 aa). A domain II region spans residues 65-143; the sequence is EKRERELFRE…AWESLPGTFT (79 aa). Residues 144 to 153 are flexible linker; that stretch reads LVSNGPNQAE. Residues 154-202 form a domain III region; sequence PVASAESDAVSALISLGYKPQEASKAVSAIKEKDLSSADLIRRALKGMG.

This sequence belongs to the RuvA family. As to quaternary structure, homotetramer. Forms an RuvA(8)-RuvB(12)-Holliday junction (HJ) complex. HJ DNA is sandwiched between 2 RuvA tetramers; dsDNA enters through RuvA and exits via RuvB. An RuvB hexamer assembles on each DNA strand where it exits the tetramer. Each RuvB hexamer is contacted by two RuvA subunits (via domain III) on 2 adjacent RuvB subunits; this complex drives branch migration. In the full resolvosome a probable DNA-RuvA(4)-RuvB(12)-RuvC(2) complex forms which resolves the HJ.

The protein localises to the cytoplasm. Functionally, the RuvA-RuvB-RuvC complex processes Holliday junction (HJ) DNA during genetic recombination and DNA repair, while the RuvA-RuvB complex plays an important role in the rescue of blocked DNA replication forks via replication fork reversal (RFR). RuvA specifically binds to HJ cruciform DNA, conferring on it an open structure. The RuvB hexamer acts as an ATP-dependent pump, pulling dsDNA into and through the RuvAB complex. HJ branch migration allows RuvC to scan DNA until it finds its consensus sequence, where it cleaves and resolves the cruciform DNA. The sequence is that of Holliday junction branch migration complex subunit RuvA from Pseudomonas savastanoi pv. phaseolicola (strain 1448A / Race 6) (Pseudomonas syringae pv. phaseolicola (strain 1448A / Race 6)).